The chain runs to 351 residues: Uroporphyrinogen decarboxylase (351 aa).

Substrate contacts are provided by residues 25-29 (RQAGR), Asp74, Tyr151, Ser206, and His325.

This sequence belongs to the uroporphyrinogen decarboxylase family. As to quaternary structure, homodimer.

The protein localises to the cytoplasm. It carries out the reaction uroporphyrinogen III + 4 H(+) = coproporphyrinogen III + 4 CO2. It functions in the pathway porphyrin-containing compound metabolism; protoporphyrin-IX biosynthesis; coproporphyrinogen-III from 5-aminolevulinate: step 4/4. Catalyzes the decarboxylation of four acetate groups of uroporphyrinogen-III to yield coproporphyrinogen-III. This Chlorobium phaeobacteroides (strain BS1) protein is Uroporphyrinogen decarboxylase.